The primary structure comprises 315 residues: Probable cell division protein WhiA (315 aa).

The segment at residues Thr-275–Arg-309 is a DNA-binding region (H-T-H motif).

This sequence belongs to the WhiA family.

Involved in cell division and chromosome segregation. The polypeptide is Probable cell division protein WhiA (Lysinibacillus sphaericus (strain C3-41)).